Consider the following 257-residue polypeptide: Electron transfer flavoprotein subunit beta (257 aa).

The protein belongs to the ETF beta-subunit/FixA family. In terms of assembly, heterodimer of an alpha and a beta subunit. FAD serves as cofactor. It depends on AMP as a cofactor.

In terms of biological role, the electron transfer flavoprotein serves as a specific electron acceptor for other dehydrogenases. It transfers the electrons to the main respiratory chain via ETF-ubiquinone oxidoreductase (ETF dehydrogenase). The chain is Electron transfer flavoprotein subunit beta (etfB) from Bacillus subtilis (strain 168).